We begin with the raw amino-acid sequence, 255 residues long: MKPISNPMGLSPTKQNVYDSVVLTTLQDVSNWVRLSSLWPLLYGTSCCFIEFASLIGSRFDFDRYGLVPRSSPRQADLIITAGTVTMKMAPSLVRLYEQMPEPKYVIAMGACTITGGMFSTDSYSTVRGVDKLIPVDVYLPGCPPKPEAIVDAIIKLRKKVAQENGQDRLNQNQQHRCFSVTHRLQPVPAVHNGEYERNITRQVPSISLDSTLQSPFEQILQSSFESVSETTLIDSQRYDNQYLQGAEIETGGLE.

[4Fe-4S] cluster contacts are provided by cysteine 47, cysteine 48, cysteine 112, and cysteine 143.

Belongs to the complex I 20 kDa subunit family. NDH is composed of at least 16 different subunits, 5 of which are encoded in the nucleus. [4Fe-4S] cluster serves as cofactor.

The protein localises to the plastid. Its subcellular location is the chloroplast thylakoid membrane. The catalysed reaction is a plastoquinone + NADH + (n+1) H(+)(in) = a plastoquinol + NAD(+) + n H(+)(out). It carries out the reaction a plastoquinone + NADPH + (n+1) H(+)(in) = a plastoquinol + NADP(+) + n H(+)(out). Its function is as follows. NDH shuttles electrons from NAD(P)H:plastoquinone, via FMN and iron-sulfur (Fe-S) centers, to quinones in the photosynthetic chain and possibly in a chloroplast respiratory chain. The immediate electron acceptor for the enzyme in this species is believed to be plastoquinone. Couples the redox reaction to proton translocation, and thus conserves the redox energy in a proton gradient. The sequence is that of NAD(P)H-quinone oxidoreductase subunit K, chloroplastic from Zygnema circumcarinatum (Green alga).